Here is a 389-residue protein sequence, read N- to C-terminus: Chalcone synthase 2 (389 aa).

55–62 contacts CoA; sequence KFQRMCDK. C164 (acyl-thioester intermediate) is an active-site residue. Residues T197 and 216-217 each bind substrate; that span reads GD. A CoA-binding site is contributed by A308.

The protein belongs to the thiolase-like superfamily. Chalcone/stilbene synthases family. As to quaternary structure, homodimer.

The catalysed reaction is (E)-4-coumaroyl-CoA + 3 malonyl-CoA + 3 H(+) = 2',4,4',6'-tetrahydroxychalcone + 3 CO2 + 4 CoA. It functions in the pathway secondary metabolite biosynthesis; flavonoid biosynthesis. Its function is as follows. The primary product of this enzyme is 4,2',4',6'-tetrahydroxychalcone (also termed naringenin-chalcone or chalcone) which can under specific conditions spontaneously isomerize into naringenin. The polypeptide is Chalcone synthase 2 (CHS2) (Medicago sativa (Alfalfa)).